The chain runs to 66 residues: Cold shock-like protein CspD (66 aa).

One can recognise a CSD domain in the interval 4 to 63 (GKVKWFNGEKGFGFIEVEGGEDVFVHFSAIQGDGFKTLEEGQEVSFEIVDGNRGPQAANV).

As to quaternary structure, homodimer.

Its subcellular location is the cytoplasm. The chain is Cold shock-like protein CspD (cspD) from Bacillus cereus.